A 251-amino-acid chain; its full sequence is 3-deoxy-manno-octulosonate cytidylyltransferase (251 aa).

This sequence belongs to the KdsB family.

Its subcellular location is the cytoplasm. The enzyme catalyses 3-deoxy-alpha-D-manno-oct-2-ulosonate + CTP = CMP-3-deoxy-beta-D-manno-octulosonate + diphosphate. It participates in nucleotide-sugar biosynthesis; CMP-3-deoxy-D-manno-octulosonate biosynthesis; CMP-3-deoxy-D-manno-octulosonate from 3-deoxy-D-manno-octulosonate and CTP: step 1/1. It functions in the pathway bacterial outer membrane biogenesis; lipopolysaccharide biosynthesis. Functionally, activates KDO (a required 8-carbon sugar) for incorporation into bacterial lipopolysaccharide in Gram-negative bacteria. The sequence is that of 3-deoxy-manno-octulosonate cytidylyltransferase from Chelativorans sp. (strain BNC1).